The primary structure comprises 178 residues: CASP-like protein 2U3 (178 aa).

Residues 1-4 (MACR) lie on the Cytoplasmic side of the membrane. The chain crosses the membrane as a helical span at residues 5-25 (VMEVLLRVLAILLSIAGALVM). Topologically, residues 26–52 (AKDKQDTFVMLGTVPVPLYARHSYVEA) are extracellular. Residues 53–73 (FVFLVYANGIVAIYCFIAVLL) traverse the membrane as a helical segment. At 74 to 80 (SLLAKSR) the chain is on the cytoplasmic side. The chain crosses the membrane as a helical span at residues 81-101 (VLAGLLFFMDQALAYLLLAAA). Over 102–132 (AASTEVAYIAKRGEKKLVWGEVCSNFEHFCN) the chain is Extracellular. A helical membrane pass occupies residues 133 to 153 (LVGVSLVLTFLSVLVLVTLAI). The Cytoplasmic segment spans residues 154–178 (LSGKRLFGHPPLCAPPSTPPVHQGV).

Belongs to the Casparian strip membrane proteins (CASP) family. Homodimer and heterodimers.

It is found in the cell membrane. This Pteridium aquilinum subsp. aquilinum (Bracken fern) protein is CASP-like protein 2U3.